Here is a 1169-residue protein sequence, read N- to C-terminus: Zinc finger protein 862 (1169 aa).

One can recognise a KRAB 1 domain in the interval Val-11–Glu-77. The segment at Lys-135 to Arg-218 adopts a TTF-type 1 zinc-finger fold. The region spanning Val-333–Gly-404 is the KRAB 2 domain. A TTF-type 2 zinc finger spans residues Arg-461–Val-544.

The protein resides in the nucleus. Functionally, may be involved in transcriptional regulation. This Homo sapiens (Human) protein is Zinc finger protein 862 (ZNF862).